We begin with the raw amino-acid sequence, 514 residues long: uncharacterized protein (514 aa).

Disordered stretches follow at residues 1–68 (MSSP…SESE), 109–244 (VPPP…RQAS), and 272–484 (RPAV…AQGC). The segment covering 368–384 (KPQKPKHSSPGKKPAGR) has biased composition (basic residues). Residues 385–405 (KTRESQAAAREDNDPNRDEVP) are compositionally biased toward basic and acidic residues.

This is an uncharacterized protein from Homo sapiens (Human).